The primary structure comprises 329 residues: Trem-like transcript 2 protein (329 aa).

A signal peptide spans 1 to 24 (MEPWPLTFLLLLLLLLWLQGCVSG). The region spanning 25 to 126 (HSNENLYRKV…HFYPLVGFQL (102 aa)) is the Ig-like V-type domain. Residues 25–270 (HSNENLYRKV…NRSQETYIPA (246 aa)) lie on the Extracellular side of the membrane. Cystine bridges form between Cys-46–Cys-110 and Cys-61–Cys-68. The disordered stretch occupies residues 202–259 (FIDTSGTVTEPERNTESQPATLSPSNARSFSADPVTTSTMSRHQSSSLSTTGTCHPLT). Polar residues predominate over residues 217–259 (ESQPATLSPSNARSFSADPVTTSTMSRHQSSSLSTTGTCHPLT). Asn-261 is a glycosylation site (N-linked (GlcNAc...) asparagine). A helical membrane pass occupies residues 271–291 (MVVVLTFLPAPVVLVVAYGFW). At 292 to 329 (KKRHMGRYNLGSNYAKPWIHLPEGPETPWKPAWSKITQ) the chain is on the cytoplasmic side.

As to quaternary structure, interacts with CD276 and this interaction enhances T-cell activation. As to expression, detected in B-lymphocytes and macrophages. Detected in spleen, lymph nodes, blood, bone marrow and cells from the peritoneal cavity (at protein level).

The protein localises to the cell membrane. Its function is as follows. Cell surface receptor that may play a role in the innate and adaptive immune response. Acts as a counter-receptor for CD276 and interaction with CD276 on T-cells enhances T-cell activation. The polypeptide is Trem-like transcript 2 protein (Treml2) (Mus musculus (Mouse)).